We begin with the raw amino-acid sequence, 439 residues long: Tubulin beta chain (439 aa).

GTP contacts are provided by glutamine 11, glutamate 69, serine 138, glycine 142, threonine 143, glycine 144, asparagine 204, and asparagine 226. Position 69 (glutamate 69) interacts with Mg(2+).

This sequence belongs to the tubulin family. Dimer of alpha and beta chains. A typical microtubule is a hollow water-filled tube with an outer diameter of 25 nm and an inner diameter of 15 nM. Alpha-beta heterodimers associate head-to-tail to form protofilaments running lengthwise along the microtubule wall with the beta-tubulin subunit facing the microtubule plus end conferring a structural polarity. Microtubules usually have 13 protofilaments but different protofilament numbers can be found in some organisms and specialized cells. It depends on Mg(2+) as a cofactor.

It localises to the cytoplasm. The protein resides in the cytoskeleton. Tubulin is the major constituent of microtubules, a cylinder consisting of laterally associated linear protofilaments composed of alpha- and beta-tubulin heterodimers. Microtubules grow by the addition of GTP-tubulin dimers to the microtubule end, where a stabilizing cap forms. Below the cap, tubulin dimers are in GDP-bound state, owing to GTPase activity of alpha-tubulin. The protein is Tubulin beta chain (TUB2) of Encephalitozoon cuniculi (strain GB-M1) (Microsporidian parasite).